We begin with the raw amino-acid sequence, 253 residues long: Pimeloyl-[acyl-carrier protein] methyl ester esterase (253 aa).

Residues Trp-18, 78-79 (SL), and 139-143 (FLALD) each bind substrate. Residue Ser-78 is the Nucleophile of the active site. Residues Asp-203 and His-231 contribute to the active site. His-231 lines the substrate pocket.

It belongs to the AB hydrolase superfamily. Carboxylesterase BioH family. Monomer.

The protein localises to the cytoplasm. The catalysed reaction is 6-carboxyhexanoyl-[ACP] methyl ester + H2O = 6-carboxyhexanoyl-[ACP] + methanol + H(+). It participates in cofactor biosynthesis; biotin biosynthesis. In terms of biological role, the physiological role of BioH is to remove the methyl group introduced by BioC when the pimeloyl moiety is complete. It allows to synthesize pimeloyl-ACP via the fatty acid synthetic pathway through the hydrolysis of the ester bonds of pimeloyl-ACP esters. This Xanthomonas campestris pv. campestris (strain 8004) protein is Pimeloyl-[acyl-carrier protein] methyl ester esterase.